The sequence spans 424 residues: Tyrosine--tRNA ligase (424 aa).

Y37 is an L-tyrosine binding site. Positions 42–51 (PTADSLHLGH) match the 'HIGH' region motif. L-tyrosine is bound by residues Y175 and Q179. The 'KMSKS' region signature appears at 235–239 (KFGKT). Position 238 (K238) interacts with ATP. Residues 357–414 (AELQKALVSAQLAPSRSQARTLIQSSSISVNGKKQLKPEYIFTSEDRLLDRYTLLRRG) enclose the S4 RNA-binding domain.

The protein belongs to the class-I aminoacyl-tRNA synthetase family. TyrS type 1 subfamily. Homodimer.

Its subcellular location is the cytoplasm. It catalyses the reaction tRNA(Tyr) + L-tyrosine + ATP = L-tyrosyl-tRNA(Tyr) + AMP + diphosphate + H(+). In terms of biological role, catalyzes the attachment of tyrosine to tRNA(Tyr) in a two-step reaction: tyrosine is first activated by ATP to form Tyr-AMP and then transferred to the acceptor end of tRNA(Tyr). The sequence is that of Tyrosine--tRNA ligase from Hamiltonella defensa subsp. Acyrthosiphon pisum (strain 5AT).